Reading from the N-terminus, the 71-residue chain is UPF0346 protein SPT_1257 (71 aa).

Belongs to the UPF0346 family.

This Streptococcus pneumoniae (strain Taiwan19F-14) protein is UPF0346 protein SPT_1257.